The chain runs to 416 residues: Tyrosine permease (416 aa).

Transmembrane regions (helical) follow at residues 13–33, 34–54, 86–106, 127–147, 153–173, 192–212, 231–251, 260–280, 286–306, 337–357, and 389–409; these read GTML…PIAM, AGIW…MMLL, VVVG…YISG, LSVI…SLLV, VLII…IWHV, LPYI…HGNV, IFIG…VTMG, PIIA…GLFT, LILT…ATLG, VVCF…GLAF, and ILNL…LDVF.

The protein belongs to the amino acid/polyamine transporter 2 family. Mtr/TnaB/TyrP permease subfamily.

The protein resides in the cell inner membrane. The sequence is that of Tyrosine permease (tutB) from Enterobacter agglomerans (Erwinia herbicola).